The chain runs to 428 residues: 26S proteasome regulatory subunit 6B homolog (428 aa).

Methionine 1 is subject to N-acetylmethionine. Residue 213-220 (GPPGTGKT) coordinates ATP. A Glycyl lysine isopeptide (Lys-Gly) (interchain with G-Cter in ubiquitin) cross-link involves residue lysine 280.

This sequence belongs to the AAA ATPase family. Post-translationally, N-acetylated by NAT3.

The protein resides in the cytoplasm. The protein localises to the nucleus. Functionally, the 26S proteasome is involved in the ATP-dependent degradation of ubiquitinated proteins. The regulatory (or ATPase) complex confers ATP dependency and substrate specificity to the 26S complex. This chain is 26S proteasome regulatory subunit 6B homolog (RPT3), found in Saccharomyces cerevisiae (strain ATCC 204508 / S288c) (Baker's yeast).